An 89-amino-acid chain; its full sequence is Small ribosomal subunit protein bS16 (89 aa).

Belongs to the bacterial ribosomal protein bS16 family.

This is Small ribosomal subunit protein bS16 from Geobacillus stearothermophilus (Bacillus stearothermophilus).